The sequence spans 283 residues: Orotidine 5'-phosphate decarboxylase (283 aa).

The active-site Proton donor is Lys97.

Belongs to the OMP decarboxylase family. Type 2 subfamily.

It carries out the reaction orotidine 5'-phosphate + H(+) = UMP + CO2. It functions in the pathway pyrimidine metabolism; UMP biosynthesis via de novo pathway; UMP from orotate: step 2/2. This is Orotidine 5'-phosphate decarboxylase from Clostridium botulinum (strain Okra / Type B1).